We begin with the raw amino-acid sequence, 233 residues long: Aspartate/glutamate leucyltransferase (233 aa).

This sequence belongs to the R-transferase family. Bpt subfamily.

The protein localises to the cytoplasm. It carries out the reaction N-terminal L-glutamyl-[protein] + L-leucyl-tRNA(Leu) = N-terminal L-leucyl-L-glutamyl-[protein] + tRNA(Leu) + H(+). The catalysed reaction is N-terminal L-aspartyl-[protein] + L-leucyl-tRNA(Leu) = N-terminal L-leucyl-L-aspartyl-[protein] + tRNA(Leu) + H(+). Its function is as follows. Functions in the N-end rule pathway of protein degradation where it conjugates Leu from its aminoacyl-tRNA to the N-termini of proteins containing an N-terminal aspartate or glutamate. The chain is Aspartate/glutamate leucyltransferase from Vibrio campbellii (strain ATCC BAA-1116).